Consider the following 745-residue polypeptide: 1,4-alpha-glucan branching enzyme GlgB (745 aa).

Catalysis depends on Asp416, which acts as the Nucleophile. Residue Glu469 is the Proton donor of the active site.

It belongs to the glycosyl hydrolase 13 family. GlgB subfamily. Monomer.

It carries out the reaction Transfers a segment of a (1-&gt;4)-alpha-D-glucan chain to a primary hydroxy group in a similar glucan chain.. It participates in glycan biosynthesis; glycogen biosynthesis. Its function is as follows. Catalyzes the formation of the alpha-1,6-glucosidic linkages in glycogen by scission of a 1,4-alpha-linked oligosaccharide from growing alpha-1,4-glucan chains and the subsequent attachment of the oligosaccharide to the alpha-1,6 position. This is 1,4-alpha-glucan branching enzyme GlgB from Shewanella sp. (strain MR-7).